Here is a 1048-residue protein sequence, read N- to C-terminus: uncharacterized protein (1048 aa).

The tract at residues 601–629 is disordered; the sequence is ENQINEEQQTNVENEQQTEQQFENEDKET. Residues 605 to 621 show a composition bias toward low complexity; the sequence is NEEQQTNVENEQQTEQQ.

This is an uncharacterized protein from Methanocaldococcus jannaschii (strain ATCC 43067 / DSM 2661 / JAL-1 / JCM 10045 / NBRC 100440) (Methanococcus jannaschii).